A 162-amino-acid polypeptide reads, in one-letter code: Shikimate kinase (162 aa).

G11 to S16 serves as a coordination point for ATP. Residue S15 participates in Mg(2+) binding. Residues D33, R57, and G80 each contribute to the substrate site. R116 is a binding site for ATP. R132 serves as a coordination point for substrate.

This sequence belongs to the shikimate kinase family. In terms of assembly, monomer. The cofactor is Mg(2+).

Its subcellular location is the cytoplasm. The enzyme catalyses shikimate + ATP = 3-phosphoshikimate + ADP + H(+). It participates in metabolic intermediate biosynthesis; chorismate biosynthesis; chorismate from D-erythrose 4-phosphate and phosphoenolpyruvate: step 5/7. Catalyzes the specific phosphorylation of the 3-hydroxyl group of shikimic acid using ATP as a cosubstrate. The protein is Shikimate kinase of Helicobacter pylori (strain P12).